Consider the following 239-residue polypeptide: Ribosomal RNA small subunit methyltransferase G (239 aa).

S-adenosyl-L-methionine-binding positions include Gly-78, Phe-83, 129–130 (AE), and Arg-148.

This sequence belongs to the methyltransferase superfamily. RNA methyltransferase RsmG family.

It localises to the cytoplasm. Specifically methylates the N7 position of a guanine in 16S rRNA. The sequence is that of Ribosomal RNA small subunit methyltransferase G from Clostridium perfringens (strain 13 / Type A).